Consider the following 221-residue polypeptide: Enolase-phosphatase E1 (221 aa).

It belongs to the HAD-like hydrolase superfamily. MasA/MtnC family. Monomer. It depends on Mg(2+) as a cofactor.

The enzyme catalyses 5-methylsulfanyl-2,3-dioxopentyl phosphate + H2O = 1,2-dihydroxy-5-(methylsulfanyl)pent-1-en-3-one + phosphate. Its pathway is amino-acid biosynthesis; L-methionine biosynthesis via salvage pathway; L-methionine from S-methyl-5-thio-alpha-D-ribose 1-phosphate: step 3/6. The protein operates within amino-acid biosynthesis; L-methionine biosynthesis via salvage pathway; L-methionine from S-methyl-5-thio-alpha-D-ribose 1-phosphate: step 4/6. Bifunctional enzyme that catalyzes the enolization of 2,3-diketo-5-methylthiopentyl-1-phosphate (DK-MTP-1-P) into the intermediate 2-hydroxy-3-keto-5-methylthiopentenyl-1-phosphate (HK-MTPenyl-1-P), which is then dephosphorylated to form the acireductone 1,2-dihydroxy-3-keto-5-methylthiopentene (DHK-MTPene). The protein is Enolase-phosphatase E1 of Xanthobacter autotrophicus (strain ATCC BAA-1158 / Py2).